Reading from the N-terminus, the 207-residue chain is Dephospho-CoA kinase (207 aa).

The region spanning 12–207 (LIGITGMIGG…LYSTLLGKML (196 aa)) is the DPCK domain. Residue 20–25 (GGGKST) coordinates ATP.

It belongs to the CoaE family.

The protein localises to the cytoplasm. The enzyme catalyses 3'-dephospho-CoA + ATP = ADP + CoA + H(+). The protein operates within cofactor biosynthesis; coenzyme A biosynthesis; CoA from (R)-pantothenate: step 5/5. Its function is as follows. Catalyzes the phosphorylation of the 3'-hydroxyl group of dephosphocoenzyme A to form coenzyme A. The protein is Dephospho-CoA kinase of Leptospira interrogans serogroup Icterohaemorrhagiae serovar copenhageni (strain Fiocruz L1-130).